The primary structure comprises 571 residues: Phosphoenolpyruvate-protein phosphotransferase (571 aa).

Residue His207 is the Tele-phosphohistidine intermediate of the active site. 2 residues coordinate phosphoenolpyruvate: Arg312 and Arg348. Mg(2+) contacts are provided by Glu435 and Asp459. Phosphoenolpyruvate-binding positions include 458 to 459 and Arg469; that span reads ND. The active-site Proton donor is the Cys506.

Belongs to the PEP-utilizing enzyme family. As to quaternary structure, homodimer. The cofactor is Mg(2+).

The protein resides in the cytoplasm. The catalysed reaction is L-histidyl-[protein] + phosphoenolpyruvate = N(pros)-phospho-L-histidyl-[protein] + pyruvate. Functionally, general (non sugar-specific) component of the phosphoenolpyruvate-dependent sugar phosphotransferase system (sugar PTS). This major carbohydrate active-transport system catalyzes the phosphorylation of incoming sugar substrates concomitantly with their translocation across the cell membrane. Enzyme I transfers the phosphoryl group from phosphoenolpyruvate (PEP) to the phosphoryl carrier protein (HPr). The sequence is that of Phosphoenolpyruvate-protein phosphotransferase (ptsI) from Chlamydia trachomatis serovar D (strain ATCC VR-885 / DSM 19411 / UW-3/Cx).